The following is a 249-amino-acid chain: UDP-N-acetyl-D-mannosaminuronic acid transferase (249 aa).

This sequence belongs to the glycosyltransferase 26 family.

The enzyme catalyses UDP-N-acetyl-alpha-D-mannosaminouronate + N-acetyl-alpha-D-glucosaminyl-di-trans,octa-cis-undecaprenyl diphosphate = beta-D-ManNAcA-(1-&gt;4)-alpha-D-GlcNAc-di-trans,octa-cis-undecaprenyl diphosphate + UDP + H(+). The protein operates within bacterial outer membrane biogenesis; enterobacterial common antigen biosynthesis. Functionally, catalyzes the synthesis of Und-PP-GlcNAc-ManNAcA (Lipid II), the second lipid-linked intermediate involved in enterobacterial common antigen (ECA) synthesis. This chain is UDP-N-acetyl-D-mannosaminuronic acid transferase, found in Pectobacterium carotovorum subsp. carotovorum (strain PC1).